Here is a 158-residue protein sequence, read N- to C-terminus: Style cell-cycle inhibitor 1-B (158 aa).

Composition is skewed to basic and acidic residues over residues 1–11 (MGSDKKTTEEK) and 22–47 (PRDE…DKSK). Residues 1-88 (MGSDKKTTEE…DKSKNKFEEL (88 aa)) are disordered. Composition is skewed to basic residues over residues 48 to 58 (KEKHKSHKSKC) and 67 to 81 (GEKH…KDKS).

In terms of tissue distribution, specifically expressed in flowers pistils, especially in stigmas and styles. Barely detected in roots, stems, leaves, sepals, petals and stamen.

The protein resides in the nucleus. In terms of biological role, component of the auxin signaling transduction pathway that regulates cell proliferation and differentiation during flowers stigmas and styles development. Involved in the regulation of auxin-related genes. The protein is Style cell-cycle inhibitor 1-B of Nicotiana tabacum (Common tobacco).